We begin with the raw amino-acid sequence, 98 residues long: RING finger protein Z (98 aa).

A compositionally biased stretch (basic and acidic residues) spans Met-1 to Gln-10. The segment at Met-1 to Leu-26 is disordered. Gly-2 carries N-myristoyl glycine; by host lipidation. The span at Tyr-11–Ala-23 shows a compositional bias: polar residues. The segment at Cys-41–Cys-77 adopts an RING-type; atypical zinc-finger fold. The PTAP/PSAP motif signature appears at Pro-91–Pro-94.

Belongs to the arenaviridae Z protein family. In terms of assembly, interacts with protein NP; this interaction probably directs the encapsidated genome to budding sites. Interacts (via RING domain) with polymerase L; this interaction inhibits viral transcription and replication, Z partially blocks the product exit tunnel for the releasing nascent RNA product. Interacts with the glycoprotein complex; this interaction plays a role in virion budding. Interacts with host eIF4E; this interaction results in eIF4E reduced affinity for its substrate, the 5'-m7 G cap structure. Interacts (via late-budding domain) with host TSG101; this interaction is essential for budding and release of viral particles. Interacts with host RPLP0; this interaction may serve to load ribosome-like particles inside the virion. Interacts with host PML; this interaction induces PML bodies redistribution in the cytoplasm upon viral infection. Myristoylation is required for the role of RING finger protein Z in assembly and budding.

It is found in the virion. It localises to the host cytoplasm. Its subcellular location is the host perinuclear region. The protein localises to the host cell membrane. Its function is as follows. Plays a crucial role in virion assembly and budding. Expressed late in the virus life cycle, it acts as an inhibitor of viral transcription and RNA synthesis by interacting with the viral polymerase L. Presumably recruits the NP encapsidated genome to cellular membranes at budding sites via direct interaction with NP. Plays critical roles in the final steps of viral release by interacting with host TSG101, a member of the vacuolar protein-sorting pathway and using other cellular host proteins involved in vesicle formation pathway. The budding of the virus progeny occurs after association of protein Z with the viral glycoprotein complex SSP-GP1-GP2 at the cell periphery, step that requires myristoylation of protein Z. Also selectively represses protein production by associating with host eIF4E. In cell-based minigenome assay, has an inhibitory effect on the ribonucleoprotein machinery (vRNP), which is responsible for the replication and transcription of the viral genome. The chain is RING finger protein Z from Chapare mammarenavirus (isolate Human/Bolivia/810419/2003).